A 61-amino-acid chain; its full sequence is Large ribosomal subunit protein uL30 (61 aa).

Belongs to the universal ribosomal protein uL30 family. Part of the 50S ribosomal subunit.

The polypeptide is Large ribosomal subunit protein uL30 (Mycolicibacterium gilvum (strain PYR-GCK) (Mycobacterium gilvum (strain PYR-GCK))).